Reading from the N-terminus, the 540-residue chain is Chaperonin GroEL (540 aa).

ATP-binding positions include 30–33, 87–91, glycine 414, 479–481, and aspartate 495; these read TLGP, DGTTT, and NAL.

This sequence belongs to the chaperonin (HSP60) family. As to quaternary structure, forms a cylinder of 14 subunits composed of two heptameric rings stacked back-to-back. Interacts with the co-chaperonin GroES.

Its subcellular location is the cytoplasm. The enzyme catalyses ATP + H2O + a folded polypeptide = ADP + phosphate + an unfolded polypeptide.. Functionally, together with its co-chaperonin GroES, plays an essential role in assisting protein folding. The GroEL-GroES system forms a nano-cage that allows encapsulation of the non-native substrate proteins and provides a physical environment optimized to promote and accelerate protein folding. The polypeptide is Chaperonin GroEL (Carboxydothermus hydrogenoformans (strain ATCC BAA-161 / DSM 6008 / Z-2901)).